We begin with the raw amino-acid sequence, 366 residues long: Flagellar P-ring protein (366 aa).

An N-terminal signal peptide occupies residues 1 to 22 (MFTRKSVILMAVLLIWSAVSYA).

Belongs to the FlgI family. The basal body constitutes a major portion of the flagellar organelle and consists of four rings (L,P,S, and M) mounted on a central rod.

The protein resides in the periplasm. It localises to the bacterial flagellum basal body. In terms of biological role, assembles around the rod to form the L-ring and probably protects the motor/basal body from shearing forces during rotation. This is Flagellar P-ring protein from Hydrogenovibrio crunogenus (strain DSM 25203 / XCL-2) (Thiomicrospira crunogena).